The primary structure comprises 242 residues: MSKRRIAPLTFLRRLLLRILAALAVFWGGGIALFSVVPVPFSAVMAERQISAWLGGEFGYVAHSDWVSMADISPWMGLAVIAAEDQKFPEHWGFDVPAIEKALAHNERNESRIRGASTLSQQTAKNLFLWDGRSWVRKGLEAGLTLGIETVWSKKRILTVYLNIAEFGDGIFGVEAAAQRYFHKPASRLSVSEAALLAAVLPNPLRYKANAPSGYVRSRQAWIMRQMRQLGGESFMTRNQLN.

A helical membrane pass occupies residues 19 to 39 (ILAALAVFWGGGIALFSVVPV).

The protein belongs to the glycosyltransferase 51 family.

Its subcellular location is the cell inner membrane. The catalysed reaction is [GlcNAc-(1-&gt;4)-Mur2Ac(oyl-L-Ala-gamma-D-Glu-L-Lys-D-Ala-D-Ala)](n)-di-trans,octa-cis-undecaprenyl diphosphate + beta-D-GlcNAc-(1-&gt;4)-Mur2Ac(oyl-L-Ala-gamma-D-Glu-L-Lys-D-Ala-D-Ala)-di-trans,octa-cis-undecaprenyl diphosphate = [GlcNAc-(1-&gt;4)-Mur2Ac(oyl-L-Ala-gamma-D-Glu-L-Lys-D-Ala-D-Ala)](n+1)-di-trans,octa-cis-undecaprenyl diphosphate + di-trans,octa-cis-undecaprenyl diphosphate + H(+). It participates in cell wall biogenesis; peptidoglycan biosynthesis. Functionally, peptidoglycan polymerase that catalyzes glycan chain elongation from lipid-linked precursors. This is Biosynthetic peptidoglycan transglycosylase from Salmonella typhi.